The primary structure comprises 315 residues: Mannose-6-phosphate isomerase ManA (315 aa).

Zn(2+) contacts are provided by histidine 97, glutamate 115, and histidine 172. The active site involves arginine 192.

The protein belongs to the mannose-6-phosphate isomerase type 1 family. The cofactor is Zn(2+).

It catalyses the reaction D-mannose 6-phosphate = D-fructose 6-phosphate. The polypeptide is Mannose-6-phosphate isomerase ManA (manA) (Bacillus subtilis (strain 168)).